The sequence spans 1103 residues: Platelet-derived growth factor receptor beta (1103 aa).

A signal peptide spans 1 to 31 (MQVPGTMPAPVLKGQALWLPLLLMLSPQASG). Ig-like C2-type domains are found at residues 33–120 (LVIT…YIFV), 129–210 (PVDP…YSLQ), 214–309 (INVS…INVT), 331–403 (HRSR…HEDA), and 416–524 (PVRV…VTVV). The Extracellular segment spans residues 33 to 532 (LVITPPGPEL…VVPHSLPFKV (500 aa)). N-linked (GlcNAc...) asparagine glycans are attached at residues N45 and N89. 2 disulfide bridges follow: C54/C100 and C149/C190. N-linked (GlcNAc...) asparagine glycans are attached at residues N215 and N230. A disulfide bridge links C235 with C291. N292, N307, N354, N371, N468, and N479 each carry an N-linked (GlcNAc...) asparagine glycan. C436 and C508 are oxidised to a cystine. Residues 533-553 (VVISAILALVVLTIISLIILI) traverse the membrane as a helical segment. Topologically, residues 554–1103 (MLWQKKPRYE…PRAEAEDSFL (550 aa)) are cytoplasmic. Y562, Y579, and Y581 each carry phosphotyrosine; by autocatalysis. In terms of domain architecture, Protein kinase spans 600-962 (LVLGRTLGSG…QLVLLLERLL (363 aa)). Residues 606–614 (LGSGAFGQV) and K634 each bind ATP. Y686 carries the phosphotyrosine; by ABL1 and ABL2 modification. Phosphotyrosine; by autocatalysis is present on residues Y716, Y740, Y751, Y763, Y771, Y775, and Y778. D826 (proton acceptor) is an active-site residue. A Phosphotyrosine; by autocatalysis modification is found at Y857. A phosphotyrosine; by ABL1 and ABL2 mark is found at Y934 and Y970. Residues Y1009 and Y1021 each carry the phosphotyrosine; by autocatalysis modification. The segment at 1017–1103 (GDNDYIIPLP…PRAEAEDSFL (87 aa)) is disordered. Residues 1039–1059 (SSPSLASSTLNEVNTSSTISC) show a composition bias toward polar residues. Positions 1065-1075 (PQEEPEPEPEP) are enriched in acidic residues. Residues 1076–1086 (QPEPQVVPEPP) are compositionally biased toward pro residues.

The protein belongs to the protein kinase superfamily. Tyr protein kinase family. CSF-1/PDGF receptor subfamily. In terms of assembly, interacts with homodimeric PDGFB and PDGFD, and with heterodimers formed by PDGFA and PDGFB. May also interact with homodimeric PDGFC. Monomer in the absence of bound ligand. Interaction with homodimeric PDGFB, heterodimers formed by PDGFA and PDGFB or homodimeric PDGFD, leads to receptor dimerization, where both PDGFRA homodimers and heterodimers with PDGFRB are observed. Interacts with SH2B2/APS. Interacts directly (tyrosine phosphorylated) with SHB. Interacts (tyrosine phosphorylated) with PIK3R1 and RASA1. Interacts (tyrosine phosphorylated) with CBL. Interacts (tyrosine phosphorylated) with SRC and SRC family kinases. Interacts (tyrosine phosphorylated) with PIK3C2B, maybe indirectly. Interacts (tyrosine phosphorylated) with SHC1, GRB7, GRB10 and NCK1. Interaction with GRB2 is mediated by SHC1. Interacts (via C-terminus) with NHERF1. In terms of processing, N-glycosylated. Post-translationally, ubiquitinated. After autophosphorylation, the receptor is polyubiquitinated, leading to its degradation. Autophosphorylated on tyrosine residues upon ligand binding. Autophosphorylation occurs in trans, i.e. one subunit of the dimeric receptor phosphorylates tyrosine residues on the other subunit. Phosphorylation at Tyr-579, and to a lesser degree, Tyr-581 is important for interaction with SRC. Phosphorylation at Tyr-716 is important for interaction with GRB2. Phosphorylation at Tyr-740 and Tyr-751 is important for interaction with PIK3R1. Phosphorylation at Tyr-751 is important for interaction with NCK1. Phosphorylation at Tyr-771 and Tyr-857 is important for interaction with RASA1/GAP. Phosphorylation at Tyr-857 is important for efficient phosphorylation of PLCG1 and PTPN11, resulting in increased phosphorylation of AKT1, MAPK1/ERK2 and/or MAPK3/ERK1, PDCD6IP/ALIX and STAM, and in increased cell proliferation. Phosphorylation at Tyr-1009 is important for interaction with PTPN11. Phosphorylation at Tyr-1009 and Tyr-1021 is important for interaction with PLCG1. Dephosphorylated by PTPRJ at Tyr-751, Tyr-857, Tyr-1009 and Tyr-1021. Dephosphorylated by PTPN2 at Tyr-579 and Tyr-1021.

Its subcellular location is the cell membrane. It is found in the cytoplasmic vesicle. It localises to the lysosome lumen. It catalyses the reaction L-tyrosyl-[protein] + ATP = O-phospho-L-tyrosyl-[protein] + ADP + H(+). Present in an inactive conformation in the absence of bound ligand. Binding of PDGFB and/or PDGFD leads to dimerization and activation by autophosphorylation on tyrosine residues. In terms of biological role, tyrosine-protein kinase that acts as a cell-surface receptor for homodimeric PDGFB and PDGFD and for heterodimers formed by PDGFA and PDGFB, and plays an essential role in the regulation of embryonic development, cell proliferation, survival, differentiation, chemotaxis and migration. Plays an essential role in blood vessel development by promoting proliferation, migration and recruitment of pericytes and smooth muscle cells to endothelial cells. Plays a role in the migration of vascular smooth muscle cells and the formation of neointima at vascular injury sites. Required for normal development of the cardiovascular system. Required for normal recruitment of pericytes (mesangial cells) in the kidney glomerulus, and for normal formation of a branched network of capillaries in kidney glomeruli. Promotes rearrangement of the actin cytoskeleton and the formation of membrane ruffles. Binding of its cognate ligands - homodimeric PDGFB, heterodimers formed by PDGFA and PDGFB or homodimeric PDGFD -leads to the activation of several signaling cascades; the response depends on the nature of the bound ligand and is modulated by the formation of heterodimers between PDGFRA and PDGFRB. Phosphorylates PLCG1, PIK3R1, PTPN11, RASA1/GAP, CBL, SHC1 and NCK1. Activation of PLCG1 leads to the production of the cellular signaling molecules diacylglycerol and inositol 1,4,5-trisphosphate, mobilization of cytosolic Ca(2+) and the activation of protein kinase C. Phosphorylation of PIK3R1, the regulatory subunit of phosphatidylinositol 3-kinase, leads to the activation of the AKT1 signaling pathway. Phosphorylation of SHC1, or of the C-terminus of PTPN11, creates a binding site for GRB2, resulting in the activation of HRAS, RAF1 and down-stream MAP kinases, including MAPK1/ERK2 and/or MAPK3/ERK1. Promotes phosphorylation and activation of SRC family kinases. Promotes phosphorylation of PDCD6IP/ALIX and STAM. Receptor signaling is down-regulated by protein phosphatases that dephosphorylate the receptor and its down-stream effectors, and by rapid internalization of the activated receptor. In Canis lupus familiaris (Dog), this protein is Platelet-derived growth factor receptor beta (PDGFRB).